Reading from the N-terminus, the 552-residue chain is Rhodopsin kinase GRK7 (552 aa).

A Phosphoserine; by PKA modification is found at Ser-36. Positions 56–176 constitute an RGS domain; that stretch reads FHSLCEQQPI…LASPFYDKFL (121 aa). Residues 191–454 enclose the Protein kinase domain; sequence FEEFRVLGKG…SDDPRKHHFF (264 aa). ATP contacts are provided by residues 197 to 205 and Lys-220; that span reads LGKGGFGEV. Asp-316 functions as the Proton acceptor in the catalytic mechanism. The region spanning 455 to 520 is the AGC-kinase C-terminal domain; it reads KTINFPRLEA…GAVPIAWQEE (66 aa). At Cys-549 the chain carries Cysteine methyl ester. The S-geranylgeranyl cysteine moiety is linked to residue Cys-549. A propeptide spans 550 to 552 (removed in mature form); it reads LLL.

The protein belongs to the protein kinase superfamily. AGC Ser/Thr protein kinase family. GPRK subfamily. In terms of assembly, interacts (when prenylated) with PDE6D; this promotes release from membranes. In terms of processing, autophosphorylated in vitro at Ser-490. Phosphorylation at Ser-36 is regulated by light and activated by cAMP.

It localises to the membrane. The enzyme catalyses L-threonyl-[rhodopsin] + ATP = O-phospho-L-threonyl-[rhodopsin] + ADP + H(+). It catalyses the reaction L-seryl-[rhodopsin] + ATP = O-phospho-L-seryl-[rhodopsin] + ADP + H(+). Inhibited by phosphorylation of Ser-36. Its function is as follows. Retina-specific kinase involved in the shutoff of the photoresponse and adaptation to changing light conditions via cone opsin phosphorylation, including rhodopsin (RHO). This is Rhodopsin kinase GRK7 (GRK7) from Bos taurus (Bovine).